The following is a 314-amino-acid chain: uncharacterized protein (314 aa).

This is an uncharacterized protein from Acanthamoeba polyphaga mimivirus (APMV).